The chain runs to 625 residues: DNA mismatch repair protein MutL (625 aa).

The protein belongs to the DNA mismatch repair MutL/HexB family.

Functionally, this protein is involved in the repair of mismatches in DNA. It is required for dam-dependent methyl-directed DNA mismatch repair. May act as a 'molecular matchmaker', a protein that promotes the formation of a stable complex between two or more DNA-binding proteins in an ATP-dependent manner without itself being part of a final effector complex. This chain is DNA mismatch repair protein MutL, found in Xanthomonas axonopodis pv. citri (strain 306).